The chain runs to 558 residues: 5-aminolevulinate synthase, mitochondrial (558 aa).

A mitochondrion-targeting transit peptide spans methionine 1–arginine 25. Residues threonine 103–valine 124 form a disordered region. Substrate contacts are provided by arginine 152, serine 265, and lysine 284. Pyridoxal 5'-phosphate-binding residues include serine 317, histidine 345, and threonine 374. Lysine 377 is a catalytic residue. An N6-(pyridoxal phosphate)lysine modification is found at lysine 377. Pyridoxal 5'-phosphate is bound by residues threonine 406 and threonine 407. Position 492 (threonine 492) interacts with substrate.

The protein belongs to the class-II pyridoxal-phosphate-dependent aminotransferase family. As to quaternary structure, homodimer. Requires pyridoxal 5'-phosphate as cofactor.

It is found in the mitochondrion matrix. It catalyses the reaction succinyl-CoA + glycine + H(+) = 5-aminolevulinate + CO2 + CoA. Its pathway is porphyrin-containing compound metabolism; protoporphyrin-IX biosynthesis; 5-aminolevulinate from glycine: step 1/1. Functionally, catalyzes the synthesis of 5-aminolevulinate (ALA) from succinyl-CoA and glycine, the first and rate-limiting step in heme biosynthesis. In Schizosaccharomyces pombe (strain 972 / ATCC 24843) (Fission yeast), this protein is 5-aminolevulinate synthase, mitochondrial.